The sequence spans 227 residues: 2,3-bisphosphoglycerate-dependent phosphoglycerate mutase (227 aa).

Substrate-binding positions include 7 to 14 (RHGFSEWN), 20 to 21 (TG), R59, 86 to 89 (ERHY), K97, 113 to 114 (RR), and 182 to 183 (GN). H8 acts as the Tele-phosphohistidine intermediate in catalysis. Catalysis depends on E86, which acts as the Proton donor/acceptor.

This sequence belongs to the phosphoglycerate mutase family. BPG-dependent PGAM subfamily. Homodimer.

It catalyses the reaction (2R)-2-phosphoglycerate = (2R)-3-phosphoglycerate. It participates in carbohydrate degradation; glycolysis; pyruvate from D-glyceraldehyde 3-phosphate: step 3/5. Functionally, catalyzes the interconversion of 2-phosphoglycerate and 3-phosphoglycerate. The protein is 2,3-bisphosphoglycerate-dependent phosphoglycerate mutase of Haemophilus influenzae (strain ATCC 51907 / DSM 11121 / KW20 / Rd).